Consider the following 104-residue polypeptide: Large ribosomal subunit protein uL24 (104 aa).

Belongs to the universal ribosomal protein uL24 family. As to quaternary structure, part of the 50S ribosomal subunit.

Its function is as follows. One of two assembly initiator proteins, it binds directly to the 5'-end of the 23S rRNA, where it nucleates assembly of the 50S subunit. Functionally, one of the proteins that surrounds the polypeptide exit tunnel on the outside of the subunit. This chain is Large ribosomal subunit protein uL24, found in Pseudomonas fluorescens (strain Pf0-1).